We begin with the raw amino-acid sequence, 396 residues long: Inositol hexakisphosphate kinase 3 (396 aa).

A substrate-binding site is contributed by 206 to 214 (PCILDLKMG).

The protein belongs to the inositol phosphokinase (IPK) family. As to expression, highly expressed in cerebellum, brain cortex, kidney, thymus and lung. Detected at lower levels in hippocampus, testis, heart and olfactory bulb.

Its subcellular location is the cytoplasm. It carries out the reaction 1D-myo-inositol hexakisphosphate + ATP = 5-diphospho-1D-myo-inositol 1,2,3,4,6-pentakisphosphate + ADP. The catalysed reaction is 1-diphospho-1D-myo-inositol 2,3,4,5,6-pentakisphosphate + ATP + H(+) = 1,5-bis(diphospho)-1D-myo-inositol 2,3,4,6-tetrakisphosphate + ADP. Its function is as follows. Converts inositol hexakisphosphate (InsP6) to diphosphoinositol pentakisphosphate (InsP7/PP-InsP5). Converts 1,3,4,5,6-pentakisphosphate (InsP5) to PP-InsP4. The sequence is that of Inositol hexakisphosphate kinase 3 (Ip6k3) from Mus musculus (Mouse).